A 599-amino-acid polypeptide reads, in one-letter code: MRIDQSIINEIKDKTDILDLVSEYVKLEKRGRNYIGLCPFHDEKTPSFTVSEDKQICHCFGCKKGGNVFQFTQEIKDISFVEAVKELGDRVNVAVDIEATQSNSNVQIASDDLQMIEMHELIQEFYYYALTKTVEGEQALTYLQERGFTDALIKERGIGFAPDSSHFCHDFLQKKGYDIELAYEAGLLSRNEENFSYYDRFRNRIMFPLKNAQGRIVGYSGRTYTGQEPKYLNSPETPIFQKRKLLYNLDKARKSIRKLDEIVLLEGFMDVIKSDTAGLKNVVATMGTQLSDEHITFIRKLTSNITLMFDGDFAGSEATLKTGQHLLQQGLNVFVIQLPSGMDPDEYIGKYGNDAFTAFVKNDKKSFAHYKVSILKDEIAHNDLSYERYLKELSHDISLMKSSILQQKALNDVAPFFNVSPEQLANEIQFNQAPANYYPEDEYGGYIEPEPIGMAQFDNLSRQEKAERAFLKHLMRDKDTFLNYYESVDKDNFTNQHFKYVFEVLHDFYAENDQYNISDAVQYVNSNELRETLISLEQYSLNDEPYENEIDDYVNVINENGQETIESLNHKLREATRIGDVELQKYYLQQIVAKNKERM.

The CHC2-type zinc finger occupies 38–62 (CPFHDEKTPSFTVSEDKQICHCFGC). The Toprim domain occupies 260–341 (DEIVLLEGFM…NVFVIQLPSG (82 aa)). Mg(2+) contacts are provided by glutamate 266, aspartate 310, and aspartate 312.

Belongs to the DnaG primase family. Monomer. Interacts with DnaB. Requires Zn(2+) as cofactor. Mg(2+) serves as cofactor.

The catalysed reaction is ssDNA + n NTP = ssDNA/pppN(pN)n-1 hybrid + (n-1) diphosphate.. Its function is as follows. RNA polymerase that catalyzes the synthesis of short RNA molecules used as primers for DNA polymerase during DNA replication. This Staphylococcus aureus (strain MRSA252) protein is DNA primase.